A 1086-amino-acid polypeptide reads, in one-letter code: Lysine-specific demethylase 4B (1086 aa).

Residues 15-57 (IMTFRPTMDEFRDFNRYVAYIESQGAHRAGLAKIIPPKEWKPR) enclose the JmjN domain. Tyrosine 133 contacts 2-oxoglutarate. The 164-residue stretch at 146 to 309 (VAQWNIGNLR…YGKVATQCTC (164 aa)) folds into the JmjC domain. The Fe cation site is built by histidine 189 and glutamate 191. 2-oxoglutarate contacts are provided by asparagine 199 and lysine 207. Zn(2+)-binding residues include cysteine 235 and histidine 241. Lysine 242 provides a ligand contact to 2-oxoglutarate. Histidine 277 is a Fe cation binding site. The Zn(2+) site is built by cysteine 307 and cysteine 309. The span at 379-395 (SRPWRKAEEERRREPTR) shows a compositional bias: basic and acidic residues. Disordered regions lie at residues 379 to 536 (SRPW…PPGA) and 575 to 624 (PMEL…LSVV). A compositionally biased stretch (basic residues) spans 401–410 (SHRRRSQPKK). Acidic residues predominate over residues 441-450 (MPEDEEEEEL). Over residues 456-467 (HEAEGVEEDGRG) the composition is skewed to basic and acidic residues. The span at 468–480 (KPRPTKARNKKKT) shows a compositional bias: basic residues. Low complexity predominate over residues 512–522 (GPAMGPMAAEG). A compositionally biased stretch (polar residues) spans 585-597 (QAQAGDSQGTTPF). Position 599 is an N6-acetyllysine (lysine 599). The PHD-type 1 zinc-finger motif lies at 719–777 (MCFTSSGENTEPLPANSYVGEDGTSPLISCAHCCLQVHASCYGVRPELAKEGWTCSRCA). A C2HC pre-PHD-type zinc finger spans residues 782–815 (TAECCLCNLRGGALQRTTEHRWIHVICAIAVPEV). Residues 838–895 (LKCIYCRKRMKRVSGACIQCSYEHCSTSFHVTCAHAAGVLMEPDDWPYVVSITCLKHR) form a PHD-type 2 zinc finger. 2 Tudor domains span residues 905-962 (RTVS…CLRL) and 963-1019 (GPPP…EELP). The segment at 1024–1043 (SRLSLSTGTPQEPSFSGDDV) is disordered. Residues 1026-1037 (LSLSTGTPQEPS) are compositionally biased toward polar residues.

This sequence belongs to the JHDM3 histone demethylase family. Requires Fe(2+) as cofactor.

It is found in the nucleus. It carries out the reaction N(6),N(6),N(6)-trimethyl-L-lysyl(9)-[histone H3] + 2 2-oxoglutarate + 2 O2 = N(6)-methyl-L-lysyl(9)-[histone H3] + 2 formaldehyde + 2 succinate + 2 CO2. Histone demethylase that specifically demethylates 'Lys-9' of histone H3, thereby playing a role in histone code. Does not demethylate histone H3 'Lys-4', H3 'Lys-27', H3 'Lys-36' nor H4 'Lys-20'. Only able to demethylate trimethylated H3 'Lys-9', with a weaker activity than KDM4A, KDM4C and KDM4D. Demethylation of Lys residue generates formaldehyde and succinate. Plays a critical role in the development of the central nervous system (CNS). In Mus musculus (Mouse), this protein is Lysine-specific demethylase 4B (Kdm4b).